The following is a 331-amino-acid chain: Ketol-acid reductoisomerase (NADP(+)) (331 aa).

The KARI N-terminal Rossmann domain maps to 2 to 182 (AKIYTDKDAS…GATRAGVIET (181 aa)). NADP(+) is bound by residues 25–28 (YGIQ), Arg-48, Ser-53, and 83–86 (DMEQ). His-108 is an active-site residue. Gly-134 lines the NADP(+) pocket. Positions 183–328 (TFAEETETDL…AEMRKLLFGR (146 aa)) constitute a KARI C-terminal knotted domain. The Mg(2+) site is built by Asp-191, Glu-195, Glu-227, and Glu-231. Residue Ser-252 coordinates substrate.

The protein belongs to the ketol-acid reductoisomerase family. Mg(2+) serves as cofactor.

The catalysed reaction is (2R)-2,3-dihydroxy-3-methylbutanoate + NADP(+) = (2S)-2-acetolactate + NADPH + H(+). It carries out the reaction (2R,3R)-2,3-dihydroxy-3-methylpentanoate + NADP(+) = (S)-2-ethyl-2-hydroxy-3-oxobutanoate + NADPH + H(+). It participates in amino-acid biosynthesis; L-isoleucine biosynthesis; L-isoleucine from 2-oxobutanoate: step 2/4. The protein operates within amino-acid biosynthesis; L-valine biosynthesis; L-valine from pyruvate: step 2/4. Involved in the biosynthesis of branched-chain amino acids (BCAA). Catalyzes an alkyl-migration followed by a ketol-acid reduction of (S)-2-acetolactate (S2AL) to yield (R)-2,3-dihydroxy-isovalerate. In the isomerase reaction, S2AL is rearranged via a Mg-dependent methyl migration to produce 3-hydroxy-3-methyl-2-ketobutyrate (HMKB). In the reductase reaction, this 2-ketoacid undergoes a metal-dependent reduction by NADPH to yield (R)-2,3-dihydroxy-isovalerate. This chain is Ketol-acid reductoisomerase (NADP(+)), found in Pyrobaculum islandicum (strain DSM 4184 / JCM 9189 / GEO3).